Consider the following 442-residue polypeptide: Exodeoxyribonuclease 7 large subunit (442 aa).

This sequence belongs to the XseA family. As to quaternary structure, heterooligomer composed of large and small subunits.

It is found in the cytoplasm. The enzyme catalyses Exonucleolytic cleavage in either 5'- to 3'- or 3'- to 5'-direction to yield nucleoside 5'-phosphates.. Its function is as follows. Bidirectionally degrades single-stranded DNA into large acid-insoluble oligonucleotides, which are then degraded further into small acid-soluble oligonucleotides. The protein is Exodeoxyribonuclease 7 large subunit of Shewanella loihica (strain ATCC BAA-1088 / PV-4).